A 666-amino-acid chain; its full sequence is MAADYDKLFRPHEGMEAPDDMAAQPFFDPSASFPPAPASANLPKPNGQTPPPTSDDLSERFVSAPPPPPPPPPPPPPTPMPIAAGEPPSPEPAASKPPTPPMPIAGPEPAPPKPPTPPMPIAGPEPAPPKPPTPPMPIAGPAPTPTESQLAPPRPPTPQTPTGAPQQPESPAPHVPSHGPHQPRRTAPAPPWAKMPIGEPPPAPSRPSASPAEPPTRPAPQHSRRARRGHRYRTDTERNVGKVATGPSIQARLRAEEASGAQLAPGTEPSPAPLGQPRSYLAPPTRPAPTEPPPSPSPQRNSGRRAERRVHPDLAAQHAAAQPDSITAATTGGRRRKRAAPDLDATQKSLRPAAKGPKVKKVKPQKPKATKPPKVVSQRGWRHWVHALTRINLGLSPDEKYELDLHARVRRNPRGSYQIAVVGLKGGAGKTTLTAALGSTLAQVRADRILALDADPGAGNLADRVGRQSGATIADVLAEKELSHYNDIRAHTSVNAVNLEVLPAPEYSSAQRALSDADWHFIADPASRFYNLVLADCGAGFFDPLTRGVLSTVSGVVVVASVSIDGAQQASVALDWLRNNGYQDLASRACVVINHIMPGEPNVAVKDLVRHFEQQVQPGRVVVMPWDRHIAAGTEISLDLLDPIYKRKVLELAAALSDDFERAGRR.

Residues 1 to 15 (MAADYDKLFRPHEGM) are compositionally biased toward basic and acidic residues. Residues 1 to 378 (MAADYDKLFR…ATKPPKVVSQ (378 aa)) are disordered. The span at 22 to 31 (AAQPFFDPSA) shows a compositional bias: low complexity. Pro residues-rich tracts occupy residues 64-80 (APPPPPPPPPPPPPTPM), 87-144 (PPSP…PAPT), and 188-205 (PAPPWAKMPIGEPPPAPS). Positions 222–231 (HSRRARRGHR) are enriched in basic residues. Residues 284–297 (PTRPAPTEPPPSPS) show a composition bias toward pro residues. Positions 357 to 371 (PKVKKVKPQKPKATK) are enriched in basic residues. ATP is bound at residue 424 to 431 (LKGGAGKT).

Functionally, required to repress ESX-1-mediated secretion under low ATP conditions. This function requires the ATP-binding motif. In Mycobacterium tuberculosis (strain CDC 1551 / Oshkosh), this protein is ESX-1 secretion-associated protein EspI.